A 204-amino-acid chain; its full sequence is Proteasome subunit beta type-3 (204 aa).

It belongs to the peptidase T1B family. The 26S proteasome consists of a 20S proteasome core and two 19S regulatory subunits. The 20S proteasome core is composed of 28 subunits that are arranged in four stacked rings, resulting in a barrel-shaped structure. The two end rings are each formed by seven alpha subunits, and the two central rings are each formed by seven beta subunits. The catalytic chamber with the active sites is on the inside of the barrel.

The protein resides in the cytoplasm. The protein localises to the nucleus. Functionally, non-catalytic component of the proteasome, a multicatalytic proteinase complex which is characterized by its ability to cleave peptides with Arg, Phe, Tyr, Leu, and Glu adjacent to the leaving group at neutral or slightly basic pH. The proteasome has an ATP-dependent proteolytic activity. This is Proteasome subunit beta type-3 (PBC1) from Oryza sativa subsp. japonica (Rice).